The chain runs to 229 residues: Peptidase E (229 aa).

Catalysis depends on charge relay system residues S120, D135, and H157.

It belongs to the peptidase S51 family.

It is found in the cytoplasm. It carries out the reaction Dipeptidase E catalyzes the hydrolysis of dipeptides Asp-|-Xaa. It does not act on peptides with N-terminal Glu, Asn or Gln, nor does it cleave isoaspartyl peptides.. Hydrolyzes dipeptides containing N-terminal aspartate residues. May play a role in allowing the cell to use peptide aspartate to spare carbon otherwise required for the synthesis of the aspartate family of amino acids. The sequence is that of Peptidase E from Escherichia coli O6:K15:H31 (strain 536 / UPEC).